The chain runs to 130 residues: MPRPASESWSPIQSRIPAYKAVSHLRLLPTANSPSGSNQPTNPNRAQHPEGPQSREGATSPVLASLEPPTPTDLPSARARPRVPAESGPGWLHKARRPTRGILRDVLRHRGVPAQPRPAPGAHQLSSPSS.

A disordered region spans residues 23-130 (SHLRLLPTAN…GAHQLSSPSS (108 aa)). Over residues 30–45 (TANSPSGSNQPTNPNR) the composition is skewed to polar residues.

This is an uncharacterized protein from Homo sapiens (Human).